The primary structure comprises 330 residues: Biotin synthase (330 aa).

A Radical SAM core domain is found at 53 to 276 (NNIRLNVLLS…VFPFKELRLS (224 aa)). [4Fe-4S] cluster contacts are provided by cysteine 68, cysteine 72, and cysteine 75. Positions 112, 144, 204, and 274 each coordinate [2Fe-2S] cluster.

This sequence belongs to the radical SAM superfamily. Biotin synthase family. In terms of assembly, homodimer. [4Fe-4S] cluster serves as cofactor. The cofactor is [2Fe-2S] cluster.

It carries out the reaction (4R,5S)-dethiobiotin + (sulfur carrier)-SH + 2 reduced [2Fe-2S]-[ferredoxin] + 2 S-adenosyl-L-methionine = (sulfur carrier)-H + biotin + 2 5'-deoxyadenosine + 2 L-methionine + 2 oxidized [2Fe-2S]-[ferredoxin]. It participates in cofactor biosynthesis; biotin biosynthesis; biotin from 7,8-diaminononanoate: step 2/2. Its function is as follows. Catalyzes the conversion of dethiobiotin (DTB) to biotin by the insertion of a sulfur atom into dethiobiotin via a radical-based mechanism. This is Biotin synthase from Streptococcus agalactiae serotype V (strain ATCC BAA-611 / 2603 V/R).